The following is a 214-amino-acid chain: UPF0758 protein (214 aa).

In terms of domain architecture, MPN spans 92–214 (VLSSWQALLD…ELSFRAEGLL (123 aa)). His163, His165, and Asp176 together coordinate Zn(2+). Residues 163–176 (HNHPSGDPTPSQAD) carry the JAMM motif motif.

The protein belongs to the UPF0758 family.

This Rhodobacter capsulatus (Rhodopseudomonas capsulata) protein is UPF0758 protein.